A 355-amino-acid chain; its full sequence is D-alanine--D-alanine ligase (355 aa).

The ATP-grasp domain occupies 143–350 (KQIFSNLSIP…IDQLVAKLID (208 aa)). An ATP-binding site is contributed by 178–233 (IEKLNLPVFVKPANSGSSLGISKAKNKSEIIKALQKAWEIDSRIVIEEGLNVRELE). Mg(2+) contacts are provided by Asp303, Glu317, and Asn319.

It belongs to the D-alanine--D-alanine ligase family. Mg(2+) is required as a cofactor. It depends on Mn(2+) as a cofactor.

It localises to the cytoplasm. It catalyses the reaction 2 D-alanine + ATP = D-alanyl-D-alanine + ADP + phosphate + H(+). It participates in cell wall biogenesis; peptidoglycan biosynthesis. Functionally, cell wall formation. This chain is D-alanine--D-alanine ligase, found in Prochlorococcus marinus (strain MIT 9515).